Reading from the N-terminus, the 341-residue chain is Mitochondrial dimethyladenosine transferase 1 (341 aa).

Residues 1 to 27 (MASSRTLGTFRLPPLPTIREIIKLFRL) constitute a mitochondrion transit peptide. 7 residues coordinate S-adenosyl-L-methionine: leucine 38, glycine 63, glutamate 85, lysine 86, aspartate 111, valine 112, and asparagine 141.

Belongs to the class I-like SAM-binding methyltransferase superfamily. rRNA adenine N(6)-methyltransferase family. KsgA subfamily. In terms of assembly, interacts with mitochondrial RNA polymerase POLRMT. Interacts with TFAM. Bound to the maturing mtSSU until the late stages of assembly.

The protein resides in the mitochondrion. The enzyme catalyses adenosine(N)/adenosine(N+1) in rRNA + 4 S-adenosyl-L-methionine = N(6)-dimethyladenosine(N)/N(6)-dimethyladenosine(N+1) in rRNA + 4 S-adenosyl-L-homocysteine + 4 H(+). Mitochondrial methyltransferase which uses S-adenosyl methionine to dimethylate two highly conserved adjacent adenosine residues (A1583 and A1584) within the loop of helix 45 at the 3-prime end of 12S rRNA, thereby regulating the assembly or stability of the small subunit of the mitochondrial ribosome. Also required for basal transcription of mitochondrial DNA, probably via its interaction with POLRMT and TFAM. Stimulates transcription independently of the methyltransferase activity. This chain is Mitochondrial dimethyladenosine transferase 1 (TFB1M), found in Bos taurus (Bovine).